Here is a 399-residue protein sequence, read N- to C-terminus: 4-hydroxyphenylpyruvate dioxygenase (399 aa).

2 consecutive VOC domains span residues 23-166 (GYDH…LIER) and 197-355 (RIDH…LFTK). Fe cation is bound by residues His200, His283, and Glu366.

It belongs to the 4HPPD family. The cofactor is Fe cation.

It carries out the reaction 3-(4-hydroxyphenyl)pyruvate + O2 = homogentisate + CO2. The protein operates within amino-acid degradation; L-phenylalanine degradation; acetoacetate and fumarate from L-phenylalanine: step 3/6. The protein is 4-hydroxyphenylpyruvate dioxygenase (TCRP) of Coccidioides posadasii (strain C735) (Valley fever fungus).